The primary structure comprises 89 residues: Large ribosomal subunit protein bL27 (89 aa).

The segment at 1–20 (MAHKKAGGSSRNGRDSAGRR) is disordered.

The protein belongs to the bacterial ribosomal protein bL27 family.

In Zymomonas mobilis subsp. mobilis (strain ATCC 31821 / ZM4 / CP4), this protein is Large ribosomal subunit protein bL27.